We begin with the raw amino-acid sequence, 83 residues long: Cytochrome b559 subunit alpha (83 aa).

A helical transmembrane segment spans residues 21–35 (VIHSITIPSLFIAGW). Residue histidine 23 coordinates heme.

It belongs to the PsbE/PsbF family. In terms of assembly, heterodimer of an alpha subunit and a beta subunit. PSII is composed of 1 copy each of membrane proteins PsbA, PsbB, PsbC, PsbD, PsbE, PsbF, PsbH, PsbI, PsbJ, PsbK, PsbL, PsbM, PsbT, PsbX, PsbY, PsbZ, Psb30/Ycf12, at least 3 peripheral proteins of the oxygen-evolving complex and a large number of cofactors. It forms dimeric complexes. The cofactor is heme b.

It localises to the plastid. It is found in the chloroplast thylakoid membrane. Functionally, this b-type cytochrome is tightly associated with the reaction center of photosystem II (PSII). PSII is a light-driven water:plastoquinone oxidoreductase that uses light energy to abstract electrons from H(2)O, generating O(2) and a proton gradient subsequently used for ATP formation. It consists of a core antenna complex that captures photons, and an electron transfer chain that converts photonic excitation into a charge separation. In Pinus koraiensis (Korean pine), this protein is Cytochrome b559 subunit alpha.